Consider the following 245-residue polypeptide: tRNA pseudouridine synthase A (245 aa).

Residue Asp52 is the Nucleophile of the active site. Tyr111 is a binding site for substrate.

It belongs to the tRNA pseudouridine synthase TruA family. As to quaternary structure, homodimer.

It carries out the reaction uridine(38/39/40) in tRNA = pseudouridine(38/39/40) in tRNA. Its function is as follows. Formation of pseudouridine at positions 38, 39 and 40 in the anticodon stem and loop of transfer RNAs. The protein is tRNA pseudouridine synthase A of Xanthobacter autotrophicus (strain ATCC BAA-1158 / Py2).